Consider the following 193-residue polypeptide: Rho-related GTP-binding protein RhoA-C (193 aa).

Residues 12–19, 30–37, 59–63, 117–120, and 160–162 each bind GTP; these read GDGACGKT, FPEVYVPT, DTAGQ, NKKD, and SAK. (Microbial infection) O-linked (GlcNAc) tyrosine; by Yersinia Afp18 glycosylation occurs at Y34. A Cysteine methyl ester modification is found at C190. C190 carries the S-geranylgeranyl cysteine lipid modification. Residues 191–193 constitute a propeptide, removed in mature form; it reads LLL.

Belongs to the small GTPase superfamily. Rho family. Post-translationally, (Microbial infection) Glycosylated at Tyr-34 by Yersinia ruckeri toxin Afp18. Mono-O-GlcNAcylation by Afp18 inhibits RhoA activation by guanine nucleotide exchange factors and blocks RhoA signaling.

It localises to the cell membrane. Functionally, regulates a signal transduction pathway linking plasma membrane receptors to the assembly of focal adhesions and actin stress fibers. In Danio rerio (Zebrafish), this protein is Rho-related GTP-binding protein RhoA-C.